Reading from the N-terminus, the 504-residue chain is Anaerobic nitric oxide reductase transcription regulator NorR (504 aa).

A 4-aspartylphosphate modification is found at Asp57. Residues 187 to 416 (MIGLSPGMTQ…LEHAIHRAVV (230 aa)) form the Sigma-54 factor interaction domain. Residues 215 to 222 (GETGTGKE) and 278 to 287 (ADNGTLFLDE) each bind ATP. The H-T-H motif DNA-binding region spans 479 to 498 (WAACARMLETDVANLHRLAK).

It participates in nitrogen metabolism; nitric oxide reduction. Required for the expression of anaerobic nitric oxide (NO) reductase, acts as a transcriptional activator for at least the norVW operon. Activation also requires sigma-54. This chain is Anaerobic nitric oxide reductase transcription regulator NorR, found in Shigella flexneri serotype 5b (strain 8401).